A 244-amino-acid polypeptide reads, in one-letter code: Carboxy-S-adenosyl-L-methionine synthase (244 aa).

S-adenosyl-L-methionine contacts are provided by residues Y38, 63–65 (GCS), 88–89 (DN), 116–117 (DI), N131, and R198.

It belongs to the class I-like SAM-binding methyltransferase superfamily. Cx-SAM synthase family. As to quaternary structure, homodimer.

The enzyme catalyses prephenate + S-adenosyl-L-methionine = carboxy-S-adenosyl-L-methionine + 3-phenylpyruvate + H2O. Its function is as follows. Catalyzes the conversion of S-adenosyl-L-methionine (SAM) to carboxy-S-adenosyl-L-methionine (Cx-SAM). The protein is Carboxy-S-adenosyl-L-methionine synthase of Haemophilus ducreyi (strain 35000HP / ATCC 700724).